The following is a 573-amino-acid chain: Splicing factor U2af large subunit B (573 aa).

Residues 1 to 12 show a composition bias toward acidic residues; it reads MPDYEGNGEDID. Positions 1 to 187 are disordered; that stretch reads MPDYEGNGED…DMAPPTSAML (187 aa). The span at 38–145 shows a compositional bias: basic and acidic residues; sequence SDSKSQHSSR…QREHAKDRES (108 aa). Basic residues predominate over residues 161-173; the sequence is SRSRSRSRSKSKR. RRM domains follow at residues 239 to 322, 359 to 437, and 478 to 564; these read RRVY…RPSD, DRIF…RANQ, and EVIS…YPEN.

Belongs to the splicing factor SR family. Expressed in stems, leaves and apical buds.

Its subcellular location is the nucleus. Necessary for the splicing of pre-mRNA. Binds to the U -enriched regions of plant introns. This Nicotiana plumbaginifolia (Leadwort-leaved tobacco) protein is Splicing factor U2af large subunit B (U2AF65B).